Here is a 315-residue protein sequence, read N- to C-terminus: Transaldolase (315 aa).

The Schiff-base intermediate with substrate role is filled by lysine 131.

It belongs to the transaldolase family. Type 1 subfamily. In terms of assembly, homodimer.

The protein resides in the cytoplasm. The enzyme catalyses D-sedoheptulose 7-phosphate + D-glyceraldehyde 3-phosphate = D-erythrose 4-phosphate + beta-D-fructose 6-phosphate. Its pathway is carbohydrate degradation; pentose phosphate pathway; D-glyceraldehyde 3-phosphate and beta-D-fructose 6-phosphate from D-ribose 5-phosphate and D-xylulose 5-phosphate (non-oxidative stage): step 2/3. Functionally, transaldolase is important for the balance of metabolites in the pentose-phosphate pathway. The protein is Transaldolase of Actinobacillus pleuropneumoniae serotype 5b (strain L20).